We begin with the raw amino-acid sequence, 337 residues long: N-acetyl-gamma-glutamyl-phosphate reductase (337 aa).

Cys149 is an active-site residue.

It belongs to the NAGSA dehydrogenase family. Type 1 subfamily.

It localises to the cytoplasm. It catalyses the reaction N-acetyl-L-glutamate 5-semialdehyde + phosphate + NADP(+) = N-acetyl-L-glutamyl 5-phosphate + NADPH + H(+). It participates in amino-acid biosynthesis; L-arginine biosynthesis; N(2)-acetyl-L-ornithine from L-glutamate: step 3/4. Its function is as follows. Catalyzes the NADPH-dependent reduction of N-acetyl-5-glutamyl phosphate to yield N-acetyl-L-glutamate 5-semialdehyde. The polypeptide is N-acetyl-gamma-glutamyl-phosphate reductase (Wolinella succinogenes (strain ATCC 29543 / DSM 1740 / CCUG 13145 / JCM 31913 / LMG 7466 / NCTC 11488 / FDC 602W) (Vibrio succinogenes)).